Consider the following 366-residue polypeptide: GTPase Obg (366 aa).

An Obg domain is found at 1–159 (MKFLDEAKVY…KTIWLRLKLI (159 aa)). The OBG-type G domain occupies 160–327 (ADAGLVGLPN…VLRALRDVIV (168 aa)). Residues 166-173 (GLPNAGKS), 191-195 (FTTLH), 212-215 (DIPG), 279-282 (SQID), and 308-310 (SAI) each bind GTP. The Mg(2+) site is built by Ser173 and Thr193. Residues 333–366 (DDETISQRPKKHRHKLEDRPQHENGPEESEEGEE) are disordered. The segment covering 347 to 357 (KLEDRPQHENG) has biased composition (basic and acidic residues).

It belongs to the TRAFAC class OBG-HflX-like GTPase superfamily. OBG GTPase family. Monomer. It depends on Mg(2+) as a cofactor.

It is found in the cytoplasm. An essential GTPase which binds GTP, GDP and possibly (p)ppGpp with moderate affinity, with high nucleotide exchange rates and a fairly low GTP hydrolysis rate. Plays a role in control of the cell cycle, stress response, ribosome biogenesis and in those bacteria that undergo differentiation, in morphogenesis control. The protein is GTPase Obg of Allorhizobium ampelinum (strain ATCC BAA-846 / DSM 112012 / S4) (Agrobacterium vitis (strain S4)).